The chain runs to 923 residues: Transportin-3 (923 aa).

Methionine 1 is subject to N-acetylmethionine. At serine 74 the chain carries Phosphoserine. Histidine 242 and threonine 896 each carry phosphothreonine.

Interacts with (GTP-bound) Ran. Interacts with (phosphorylated) SFRS1 and SFRS2; leading to their nuclear import. Interacts with NUP62. Interacts with RBM4. Interacts with CPSF6, promoting its nuclear import.

It localises to the nucleus envelope. The protein localises to the cytoplasm. Importin, which transports target proteins into the nucleus. Specifically mediates the nuclear import of splicing factor serine/arginine (SR) proteins, such as RBM4, SFRS1 and SFRS2, by recognizing phosphorylated SR domains. Also mediates the nuclear import of serine/arginine (SR) protein CPSF6, independently of CPSF6 phosphorylation. The nuclear import process is regulated by the small GTPase Ran that partitions between cytoplasm and nucleus in the predominantly GDP- and GTP-bound form, respectively. Importin associates with target cargo proteins in the cytoplasm, and the competitive binding of GTP-bound Ran induces the release of cargos in the nucleus. The chain is Transportin-3 from Mus musculus (Mouse).